Here is a 556-residue protein sequence, read N- to C-terminus: TNF receptor-associated factor 6-B (556 aa).

The segment at 72–111 (CPICLMALREAVQTPCGHRFCKACIVKSLRDAGHKCPVDN) adopts an RING-type; degenerate zinc-finger fold. 2 TRAF-type zinc fingers span residues 152 to 204 (RHLG…EDMS) and 205 to 261 (GHEL…NDLA). Residues 318 to 356 (SHQDCSQETRNLRETIEQLEGRLVRQDHQIRELIAKMET) are a coiled coil. In terms of domain architecture, MATH spans 384-533 (NGVFIWKIKG…NDTLFVRCAV (150 aa)).

The protein belongs to the TNF receptor-associated factor family. A subfamily. As to quaternary structure, homotrimer. Homooligomer.

It is found in the cytoplasm. The protein resides in the cell cortex. Its subcellular location is the nucleus. It localises to the lipid droplet. The catalysed reaction is S-ubiquitinyl-[E2 ubiquitin-conjugating enzyme]-L-cysteine + [acceptor protein]-L-lysine = [E2 ubiquitin-conjugating enzyme]-L-cysteine + N(6)-ubiquitinyl-[acceptor protein]-L-lysine.. It functions in the pathway protein modification; protein ubiquitination. Functionally, E3 ubiquitin ligase that, together with UBE2N and UBE2V1, mediates the synthesis of 'Lys-63'-linked-polyubiquitin chains conjugated to proteins, such as IKBKG, IRAK1, AKT1 and AKT2. Also mediates ubiquitination of free/unanchored polyubiquitin chain that leads to MAP3K7 activation. This chain is TNF receptor-associated factor 6-B (traf6-b), found in Xenopus laevis (African clawed frog).